A 969-amino-acid polypeptide reads, in one-letter code: Protein translocase subunit SecA (969 aa).

ATP is bound by residues Gln-99, 117–121 (GEGKT), and Asp-631.

It belongs to the SecA family. As to quaternary structure, monomer and homodimer. Part of the essential Sec protein translocation apparatus which comprises SecA, SecYEG and auxiliary proteins SecDF. Other proteins may also be involved.

Its subcellular location is the cell inner membrane. The protein resides in the cytoplasm. The catalysed reaction is ATP + H2O + cellular proteinSide 1 = ADP + phosphate + cellular proteinSide 2.. In terms of biological role, part of the Sec protein translocase complex. Interacts with the SecYEG preprotein conducting channel. Has a central role in coupling the hydrolysis of ATP to the transfer of proteins into and across the cell membrane, serving as an ATP-driven molecular motor driving the stepwise translocation of polypeptide chains across the membrane. This is Protein translocase subunit SecA from Chlamydia abortus (strain DSM 27085 / S26/3) (Chlamydophila abortus).